We begin with the raw amino-acid sequence, 270 residues long: 3-methyl-2-oxobutanoate hydroxymethyltransferase (270 aa).

The Mg(2+) site is built by D48 and D87. 3-methyl-2-oxobutanoate contacts are provided by residues 48–49 (DS), D87, and K117. E119 contributes to the Mg(2+) binding site. Catalysis depends on E186, which acts as the Proton acceptor.

It belongs to the PanB family. Homodecamer; pentamer of dimers. Requires Mg(2+) as cofactor.

Its subcellular location is the cytoplasm. It catalyses the reaction 3-methyl-2-oxobutanoate + (6R)-5,10-methylene-5,6,7,8-tetrahydrofolate + H2O = 2-dehydropantoate + (6S)-5,6,7,8-tetrahydrofolate. It participates in cofactor biosynthesis; (R)-pantothenate biosynthesis; (R)-pantoate from 3-methyl-2-oxobutanoate: step 1/2. Catalyzes the reversible reaction in which hydroxymethyl group from 5,10-methylenetetrahydrofolate is transferred onto alpha-ketoisovalerate to form ketopantoate. The polypeptide is 3-methyl-2-oxobutanoate hydroxymethyltransferase (Synechococcus sp. (strain RCC307)).